The primary structure comprises 890 residues: Agglutinin-like protein ARB_02240 (890 aa).

A signal peptide spans 1–20 (MRLTTSVLLWAATSVLQADA). Residues Asn106, Asn217, Asn583, and Asn654 are each glycosylated (N-linked (GlcNAc...) asparagine). Positions 680 to 872 (IPSGPTTRPE…GGAGSLSPST (193 aa)) are disordered. Composition is skewed to low complexity over residues 693 to 753 (TSST…TDSS) and 760 to 790 (TTST…HSST). Residues 791-802 (GSDPESTNTRHP) show a composition bias toward polar residues. Composition is skewed to low complexity over residues 803–812 (SSTASGSTTT) and 821–837 (SSSS…TATT). The segment covering 838-848 (TGGGSIPGSGT) has biased composition (gly residues). Gly864 carries the GPI-anchor amidated glycine lipid modification. Residues 865–890 (AGSLSPSTWGKVVTCISSMALLVAFI) constitute a propeptide, removed in mature form.

This sequence belongs to the ALS family. Post-translationally, the GPI-anchor is attached to the protein in the endoplasmic reticulum and serves to target the protein to the cell surface. There, the glucosamine-inositol phospholipid moiety is cleaved off and the GPI-modified mannoprotein is covalently attached via its lipidless GPI glycan remnant to the 1,6-beta-glucan of the outer cell wall layer.

The protein localises to the secreted. It localises to the cell membrane. Its subcellular location is the cell wall. Cell surface adhesion protein which mediates cell agglutination and host tissue adherence. This is Agglutinin-like protein ARB_02240 from Arthroderma benhamiae (strain ATCC MYA-4681 / CBS 112371) (Trichophyton mentagrophytes).